A 55-amino-acid polypeptide reads, in one-letter code: Large ribosomal subunit protein bL33 (55 aa).

It belongs to the bacterial ribosomal protein bL33 family.

This chain is Large ribosomal subunit protein bL33, found in Methylobacterium radiotolerans (strain ATCC 27329 / DSM 1819 / JCM 2831 / NBRC 15690 / NCIMB 10815 / 0-1).